A 435-amino-acid chain; its full sequence is Methylenetetrahydrofolate--tRNA-(uracil-5-)-methyltransferase TrmFO (435 aa).

10 to 15 (GAGLAG) contributes to the FAD binding site.

Belongs to the MnmG family. TrmFO subfamily. In terms of assembly, homodimer. The cofactor is FAD.

It localises to the cytoplasm. It carries out the reaction uridine(54) in tRNA + (6R)-5,10-methylene-5,6,7,8-tetrahydrofolate + NADH + H(+) = 5-methyluridine(54) in tRNA + (6S)-5,6,7,8-tetrahydrofolate + NAD(+). The enzyme catalyses uridine(54) in tRNA + (6R)-5,10-methylene-5,6,7,8-tetrahydrofolate + NADPH + H(+) = 5-methyluridine(54) in tRNA + (6S)-5,6,7,8-tetrahydrofolate + NADP(+). In terms of biological role, catalyzes the folate-dependent formation of 5-methyl-uridine at position 54 (M-5-U54) in all tRNAs. The protein is Methylenetetrahydrofolate--tRNA-(uracil-5-)-methyltransferase TrmFO of Bacillus subtilis (strain 168).